A 155-amino-acid chain; its full sequence is Ribosomal RNA large subunit methyltransferase H (155 aa).

Residues L73, G104, and 123 to 128 each bind S-adenosyl-L-methionine; that span reads ISKMTF.

This sequence belongs to the RNA methyltransferase RlmH family. In terms of assembly, homodimer.

The protein localises to the cytoplasm. The enzyme catalyses pseudouridine(1915) in 23S rRNA + S-adenosyl-L-methionine = N(3)-methylpseudouridine(1915) in 23S rRNA + S-adenosyl-L-homocysteine + H(+). In terms of biological role, specifically methylates the pseudouridine at position 1915 (m3Psi1915) in 23S rRNA. The polypeptide is Ribosomal RNA large subunit methyltransferase H (Francisella tularensis subsp. novicida (strain U112)).